The following is a 275-amino-acid chain: Dermonecrotic toxin SpeSicTox-betaIIA3i (275 aa).

Histidine 5 is an active-site residue. Mg(2+) is bound by residues glutamate 25 and aspartate 27. Histidine 41 functions as the Nucleophile in the catalytic mechanism. 2 disulfide bridges follow: cysteine 45/cysteine 51 and cysteine 47/cysteine 190. Mg(2+) is bound at residue aspartate 85.

The protein belongs to the arthropod phospholipase D family. Class II subfamily. Mg(2+) is required as a cofactor. In terms of tissue distribution, expressed by the venom gland.

It localises to the secreted. It catalyses the reaction an N-(acyl)-sphingosylphosphocholine = an N-(acyl)-sphingosyl-1,3-cyclic phosphate + choline. It carries out the reaction an N-(acyl)-sphingosylphosphoethanolamine = an N-(acyl)-sphingosyl-1,3-cyclic phosphate + ethanolamine. The catalysed reaction is a 1-acyl-sn-glycero-3-phosphocholine = a 1-acyl-sn-glycero-2,3-cyclic phosphate + choline. The enzyme catalyses a 1-acyl-sn-glycero-3-phosphoethanolamine = a 1-acyl-sn-glycero-2,3-cyclic phosphate + ethanolamine. In terms of biological role, dermonecrotic toxins cleave the phosphodiester linkage between the phosphate and headgroup of certain phospholipids (sphingolipid and lysolipid substrates), forming an alcohol (often choline) and a cyclic phosphate. This toxin acts on sphingomyelin (SM). It may also act on ceramide phosphoethanolamine (CPE), lysophosphatidylcholine (LPC) and lysophosphatidylethanolamine (LPE), but not on lysophosphatidylserine (LPS), and lysophosphatidylglycerol (LPG). It acts by transphosphatidylation, releasing exclusively cyclic phosphate products as second products. Induces dermonecrosis, hemolysis, increased vascular permeability, edema, inflammatory response, and platelet aggregation. This is Dermonecrotic toxin SpeSicTox-betaIIA3i from Sicarius peruensis (Six-eyed sand spider).